The primary structure comprises 203 residues: Protein GrpE (203 aa).

The interval 1–38 (MTQDQTAEQMPAAESADQSADQGPAAESAAPPAVDSER) is disordered.

It belongs to the GrpE family. Homodimer.

It localises to the cytoplasm. Participates actively in the response to hyperosmotic and heat shock by preventing the aggregation of stress-denatured proteins, in association with DnaK and GrpE. It is the nucleotide exchange factor for DnaK and may function as a thermosensor. Unfolded proteins bind initially to DnaJ; upon interaction with the DnaJ-bound protein, DnaK hydrolyzes its bound ATP, resulting in the formation of a stable complex. GrpE releases ADP from DnaK; ATP binding to DnaK triggers the release of the substrate protein, thus completing the reaction cycle. Several rounds of ATP-dependent interactions between DnaJ, DnaK and GrpE are required for fully efficient folding. This Paramagnetospirillum magneticum (strain ATCC 700264 / AMB-1) (Magnetospirillum magneticum) protein is Protein GrpE.